The primary structure comprises 215 residues: MKFFLDTANVEKIKEFNALGLVDGVTTNPSLIKKEGRDFYEVIKEICSIVDGPVSAEVIALDSEGMVKEARELVKLAENVVVKIPMTKEGMKAVNILSKEGIKTNVTLIFSANQALLAAKAGASYVSPFVGRLDDVGQDGMFLISEVMQVFGAYGIETEVIVASVRHPIHVLESAKMGADIATIPFDVLDKLFNHPLTDNGIAKFLSDWEAHMNR.

K83 functions as the Schiff-base intermediate with substrate in the catalytic mechanism.

It belongs to the transaldolase family. Type 3B subfamily.

Its subcellular location is the cytoplasm. It carries out the reaction D-sedoheptulose 7-phosphate + D-glyceraldehyde 3-phosphate = D-erythrose 4-phosphate + beta-D-fructose 6-phosphate. It participates in carbohydrate degradation; pentose phosphate pathway; D-glyceraldehyde 3-phosphate and beta-D-fructose 6-phosphate from D-ribose 5-phosphate and D-xylulose 5-phosphate (non-oxidative stage): step 2/3. Its function is as follows. Transaldolase is important for the balance of metabolites in the pentose-phosphate pathway. The chain is Probable transaldolase from Methanococcus maripaludis (strain DSM 14266 / JCM 13030 / NBRC 101832 / S2 / LL).